The primary structure comprises 281 residues: tRNA pseudouridine synthase A (281 aa).

D55 serves as the catalytic Nucleophile. Substrate is bound at residue Y110.

The protein belongs to the tRNA pseudouridine synthase TruA family.

The enzyme catalyses uridine(38/39/40) in tRNA = pseudouridine(38/39/40) in tRNA. Formation of pseudouridine at positions 38, 39 and 40 in the anticodon stem and loop of transfer RNAs. This is tRNA pseudouridine synthase A from Methanocorpusculum labreanum (strain ATCC 43576 / DSM 4855 / Z).